We begin with the raw amino-acid sequence, 660 residues long: DNA mismatch repair protein MutL (660 aa).

Residues 414–433 are disordered; that stretch reads SSVKHASRPQNTFTETDHPN.

It belongs to the DNA mismatch repair MutL/HexB family.

In terms of biological role, this protein is involved in the repair of mismatches in DNA. It is required for dam-dependent methyl-directed DNA mismatch repair. May act as a 'molecular matchmaker', a protein that promotes the formation of a stable complex between two or more DNA-binding proteins in an ATP-dependent manner without itself being part of a final effector complex. The polypeptide is DNA mismatch repair protein MutL (Streptococcus pyogenes serotype M5 (strain Manfredo)).